Here is a 338-residue protein sequence, read N- to C-terminus: 3-keto-steroid reductase erg27 (338 aa).

Residues L16, T44, K50, and D75 each coordinate NADP(+). Residues S180 and Y203 each act as proton donor in the active site. NADP(+)-binding residues include Y203, K207, and T236. K207 (lowers pKa of active site Tyr) is an active-site residue.

This sequence belongs to the short-chain dehydrogenases/reductases (SDR) family. ERG27 subfamily. In terms of assembly, heterotetramer of erg25, erg26, erg27 and erg28. Erg28 acts as a scaffold to tether erg27 and other 4,4-demethylation-related enzymes, forming a demethylation enzyme complex, in the endoplasmic reticulum.

It carries out the reaction 3-dehydro-4alpha-methylzymosterol + NADPH + H(+) = 4alpha-methylzymosterol + NADP(+). Its pathway is steroid biosynthesis; zymosterol biosynthesis; zymosterol from lanosterol: step 5/6. The protein operates within steroid metabolism; ergosterol biosynthesis. In terms of biological role, 3-keto-steroid reductase; part of the third module of ergosterol biosynthesis pathway that includes by the late steps of the pathway. Erg27 is a catalytic component of the C-4 demethylation complex that catalyze the reduction of the keto group on the C-3. The third module or late pathway involves the ergosterol synthesis itself through consecutive reactions that mainly occur in the endoplasmic reticulum (ER) membrane. Firstly, the squalene synthase erg9 catalyzes the condensation of 2 farnesyl pyrophosphate moieties to form squalene, which is the precursor of all steroids. Secondly, squalene is converted into lanosterol by the consecutive action of the squalene epoxidase erg1 and the lanosterol synthase erg7. The lanosterol 14-alpha-demethylase erg11/cyp1 catalyzes C14-demethylation of lanosterol to produce 4,4'-dimethyl cholesta-8,14,24-triene-3-beta-ol. In the next steps, a complex process involving various demethylation, reduction and desaturation reactions catalyzed by the C-14 reductase erg24 and the C-4 demethylation complex erg25-erg26-erg27 leads to the production of zymosterol. Erg28 likely functions in the C-4 demethylation complex reaction by tethering erg26 and Erg27 to the endoplasmic reticulum or to facilitate interaction between these proteins. Then, the sterol 24-C-methyltransferase erg6 catalyzes the methyl transfer from S-adenosyl-methionine to the C-24 of zymosterol to form fecosterol. The C-8 sterol isomerase erg2 catalyzes the reaction which results in unsaturation at C-7 in the B ring of sterols and thus converts fecosterol to episterol. The sterol-C5-desaturases erg31 and erg32 then catalyze the introduction of a C-5 double bond in the B ring to produce 5-dehydroepisterol. The C-22 sterol desaturase erg5 further converts 5-dehydroepisterol into ergosta-5,7,22,24(28)-tetraen-3beta-ol by forming the C-22(23) double bond in the sterol side chain. Finally, ergosta-5,7,22,24(28)-tetraen-3beta-ol is substrate of the C-24(28) sterol reductase erg4 to produce ergosterol. In the genus Schizosaccharomyces, a second route exists between lanosterol and fecosterol, via the methylation of lanosterol to eburicol by erg6, followed by C14-demethylation by erg11/cyp1 and C4-demethylation by the demethylation complex erg25-erg26-erg27. The protein is 3-keto-steroid reductase erg27 of Schizosaccharomyces pombe (strain 972 / ATCC 24843) (Fission yeast).